We begin with the raw amino-acid sequence, 403 residues long: MSEKGRLFTSESVTEGHPDKICDAISDSVLDALLAADPRSRVAVETLVTTGQVHVVGEVTTSAKEAFADITNTVRARILEIGYDSSDKGFDGATCGVNIGIGAQSPDIAQGVDTAHEARVEGAADPLDSQGAGDQGLMFGYAINATPELMPLPIALAHRLSRRLTEVRKNGVLPYLRPDGKTQVTIAYEDNVPVQLDTVVISTQHAADIDLEKTLDPDIREKVLNTVLDDLAHETLDASTVRVLVNPTGKFVLGGPMGDAGLTGRKIIVDTYGGWARHGGGAFSGKDPSKVDRSAAYAMRWVAKNVVAAGLAERVEVQVAYAIGKAAPVGLFVETFGTETEDPVKIEKAIGEVFDLRPGAIIRDLNLLRPIYAPTAAYGHFGRTDVELPWEQLDKVDDLKRAI.

His-17 lines the ATP pocket. Residue Asp-19 participates in Mg(2+) binding. Glu-45 lines the K(+) pocket. Residues Glu-58 and Gln-104 each coordinate L-methionine. The segment at 104-114 is flexible loop; the sequence is QSPDIAQGVDT. Residues 179 to 181, 250 to 251, Asp-259, 265 to 266, Ala-282, and Lys-286 contribute to the ATP site; these read DGK, KF, and RK. Residue Asp-259 participates in L-methionine binding. Lys-290 contributes to the L-methionine binding site.

Belongs to the AdoMet synthase family. As to quaternary structure, homotetramer; dimer of dimers. Mg(2+) serves as cofactor. The cofactor is K(+).

It is found in the cytoplasm. The enzyme catalyses L-methionine + ATP + H2O = S-adenosyl-L-methionine + phosphate + diphosphate. The protein operates within amino-acid biosynthesis; S-adenosyl-L-methionine biosynthesis; S-adenosyl-L-methionine from L-methionine: step 1/1. Functionally, catalyzes the formation of S-adenosylmethionine (AdoMet) from methionine and ATP. The overall synthetic reaction is composed of two sequential steps, AdoMet formation and the subsequent tripolyphosphate hydrolysis which occurs prior to release of AdoMet from the enzyme. In Mycobacterium bovis (strain BCG / Pasteur 1173P2), this protein is S-adenosylmethionine synthase.